The chain runs to 377 residues: GTP 3',8-cyclase (377 aa).

A disordered region spans residues 1 to 29 (MTTRLYLSPTPPRNDREGASKSTSASIKH). Residues 45–271 (RFGRIARDLR…FTLSPAKEPR (227 aa)) enclose the Radical SAM core domain. Arg-54 contributes to the GTP binding site. [4Fe-4S] cluster is bound by residues Cys-61 and Cys-65. Tyr-67 provides a ligand contact to S-adenosyl-L-methionine. Cys-68 contacts [4Fe-4S] cluster. Arg-105 contacts GTP. Gly-109 lines the S-adenosyl-L-methionine pocket. Thr-140 lines the GTP pocket. Ser-164 contacts S-adenosyl-L-methionine. Lys-201 contacts GTP. Met-235 contributes to the S-adenosyl-L-methionine binding site. The [4Fe-4S] cluster site is built by Cys-304 and Cys-307. Residue 309–311 (RSR) coordinates GTP. [4Fe-4S] cluster is bound at residue Cys-321.

Belongs to the radical SAM superfamily. MoaA family. As to quaternary structure, monomer and homodimer. It depends on [4Fe-4S] cluster as a cofactor.

The enzyme catalyses GTP + AH2 + S-adenosyl-L-methionine = (8S)-3',8-cyclo-7,8-dihydroguanosine 5'-triphosphate + 5'-deoxyadenosine + L-methionine + A + H(+). The protein operates within cofactor biosynthesis; molybdopterin biosynthesis. Its function is as follows. Catalyzes the cyclization of GTP to (8S)-3',8-cyclo-7,8-dihydroguanosine 5'-triphosphate. This Corynebacterium glutamicum (strain R) protein is GTP 3',8-cyclase.